We begin with the raw amino-acid sequence, 233 residues long: Ribosomal RNA small subunit methyltransferase G (233 aa).

Residues glycine 96, leucine 101, 146–147 (LE), and arginine 160 each bind S-adenosyl-L-methionine.

The protein belongs to the methyltransferase superfamily. RNA methyltransferase RsmG family.

The protein resides in the cytoplasm. It carries out the reaction guanosine(527) in 16S rRNA + S-adenosyl-L-methionine = N(7)-methylguanosine(527) in 16S rRNA + S-adenosyl-L-homocysteine. Functionally, specifically methylates the N7 position of guanine in position 527 of 16S rRNA. The protein is Ribosomal RNA small subunit methyltransferase G of Sphingopyxis alaskensis (strain DSM 13593 / LMG 18877 / RB2256) (Sphingomonas alaskensis).